The chain runs to 197 residues: Segregation and condensation protein B (197 aa).

The protein belongs to the ScpB family. Homodimer. Homodimerization may be required to stabilize the binding of ScpA to the Smc head domains. Component of a cohesin-like complex composed of ScpA, ScpB and the Smc homodimer, in which ScpA and ScpB bind to the head domain of Smc. The presence of the three proteins is required for the association of the complex with DNA.

The protein localises to the cytoplasm. Participates in chromosomal partition during cell division. May act via the formation of a condensin-like complex containing Smc and ScpA that pull DNA away from mid-cell into both cell halves. The chain is Segregation and condensation protein B from Syntrophotalea carbinolica (strain DSM 2380 / NBRC 103641 / GraBd1) (Pelobacter carbinolicus).